A 496-amino-acid chain; its full sequence is Acyltransferase M4 (496 aa).

Residue H163 is the Proton acceptor of the active site.

The protein belongs to the plant acyltransferase family. As to quaternary structure, monomer.

It participates in secondary metabolite biosynthesis. Its function is as follows. Acyltransferase; part of the gene cluster that mediates the biosynthesis of squalestatin S1 (SQS1, also known as zaragozic acid A), a heavily oxidized fungal polyketide that offers potent cholesterol lowering activity by targeting squalene synthase (SS). SQS1 is composed of a 2,8-dioxobicyclic[3.2.1]octane-3,4,5-tricarboxyclic acid core that is connected to two lipophilic polyketide arms. These initial steps feature the priming of an unusual benzoic acid starter unit onto the highly reducing polyketide synthase pks2, followed by oxaloacetate extension and product release to generate a tricarboxylic acid containing product. The phenylalanine ammonia lyase (PAL) M7 and the acyl-CoA ligase M9 are involved in transforming phenylalanine into benzoyl-CoA. The citrate synthase-like protein R3 is involved in connecting the C-alpha-carbons of the hexaketide chain and oxaloacetate to afford the tricarboxylic acid unit. The potential hydrolytic enzymes, M8 and M10, are in close proximity to pks2 and may participate in product release. On the other side, the tetraketide arm is synthesized by a the squalestatin tetraketide synthase pks1 and enzymatically esterified to the core in the last biosynthetic step, by the acetyltransferase M4. The biosynthesis of the tetraketide must involve 3 rounds of chain extension. After the first and second rounds methyl-transfer occurs, and in all rounds of extension the ketoreductase and dehydratase are active. The enoyl reductase and C-MeT of pks1 are not active in the final round of extension. The acetyltransferase M4 appears to have a broad substrate selectivity for its acyl CoA substrate, allowing the in vitro synthesis of novel squalestatins. The biosynthesis of SQS1 requires several oxidative steps likely performed by oxidoreductases M1, R1 and R2. Finally, in support of the identification of the cluster as being responsible for SQS1 production, the cluster contains a gene encoding a putative squalene synthase (SS) R6, suggesting a likely mechanism for self-resistance. The sequence is that of Acyltransferase M4 from Phoma sp. (strain ATCC 20986 / MF5453).